The primary structure comprises 299 residues: Taste receptor type 2 member 50 (299 aa).

Position 1 (M1) is a topological domain, extracellular. A helical membrane pass occupies residues 2–22 (ITFLYIFFSILILVLFVLGNF). Topologically, residues 23–55 (ANGFIALVNFIDWVKRKKISSADQILTALAVSR) are cytoplasmic. A helical transmembrane segment spans residues 56-76 (IGLLWALLLNWYLTVLNPAFY). Over 77–87 (SVELRITSYNA) the chain is Extracellular. A helical transmembrane segment spans residues 88-108 (WVVTNHFSMWLAASLSIFYLL). Over 109-126 (KIANFSNLIFLHLKRRVR) the chain is Cytoplasmic. The helical transmembrane segment at 127 to 147 (SVILVILLGTLIFLVCHLLVA) threads the bilayer. Residues 148–181 (NMDESMWAEEYEGNMTGKMKLRNTVHLSYLTVTT) lie on the Extracellular side of the membrane. N161 is a glycosylation site (N-linked (GlcNAc...) asparagine). Residues 182–202 (LWSFIPFTLSLISFLMLICSL) form a helical membrane-spanning segment. The Cytoplasmic portion of the chain corresponds to 203-229 (CKHLKKMQLHGEGSQDLSTKVHIKALQ). Residues 230–250 (TLISFLLLCAIFFLFLIISVW) form a helical membrane-spanning segment. At 251–259 (SPRRLQNDP) the chain is on the extracellular side. The chain crosses the membrane as a helical span at residues 260-280 (VVMVSKAVGNIYLAFDSFILI). The Cytoplasmic segment spans residues 281–299 (WRTKKLKHTFLLILCQIRC).

This sequence belongs to the G-protein coupled receptor T2R family.

The protein localises to the membrane. Its function is as follows. Receptor that may play a role in the perception of bitterness and is gustducin-linked. May play a role in sensing the chemical composition of the gastrointestinal content. The activity of this receptor may stimulate alpha gustducin, mediate PLC-beta-2 activation and lead to the gating of TRPM5. The sequence is that of Taste receptor type 2 member 50 (TAS2R50) from Gorilla gorilla gorilla (Western lowland gorilla).